A 181-amino-acid chain; its full sequence is MSRIGKKPVVVPKGVTVTIDGSTVTVKGPKGTLTRTFDPRIKISLIEDQIIVERTSEEKEVRALHGTTRALIQNMVTGVSEGFSVTLKIRGVGYRAELKGKDLQMSLGFSHPVVIQSIEGIQFQVPSADTVVVSGIDKQLVTQVAANIRRYRIPDAYKGKGIWYEGEQRPLKPGKAVGKGK.

The protein belongs to the universal ribosomal protein uL6 family. In terms of assembly, part of the 50S ribosomal subunit.

This protein binds to the 23S rRNA, and is important in its secondary structure. It is located near the subunit interface in the base of the L7/L12 stalk, and near the tRNA binding site of the peptidyltransferase center. In Coprothermobacter proteolyticus (strain ATCC 35245 / DSM 5265 / OCM 4 / BT), this protein is Large ribosomal subunit protein uL6.